The primary structure comprises 156 residues: Large ribosomal subunit protein uL15 (156 aa).

The interval 29 to 48 (CGKGKTSGRGHKGQKARSGV) is disordered. The span at 34–43 (TSGRGHKGQK) shows a compositional bias: basic residues.

The protein belongs to the universal ribosomal protein uL15 family. Part of the 50S ribosomal subunit.

In terms of biological role, binds to the 23S rRNA. The protein is Large ribosomal subunit protein uL15 of Ehrlichia chaffeensis (strain ATCC CRL-10679 / Arkansas).